Here is a 358-residue protein sequence, read N- to C-terminus: tRNA (guanine-N(7)-)-methyltransferase (358 aa).

The tract at residues 1 to 29 (MTPPPPKRQKRDEYRKATAEATSQSGASD) is disordered. Residues glycine 99 and 122–123 (EI) contribute to the S-adenosyl-L-methionine site. Positions 151–186 (TATAASETPSQQQAQIDGKQANANAAADAASPAPST) are enriched in low complexity. The tract at residues 151 to 194 (TATAASETPSQQQAQIDGKQANANAAADAASPAPSTDTEHMPTT) is disordered. Residues 209–210 (NT) and cysteine 229 contribute to the S-adenosyl-L-methionine site. The active site involves aspartate 232. 330 to 332 (TEE) lines the S-adenosyl-L-methionine pocket.

It belongs to the class I-like SAM-binding methyltransferase superfamily. TrmB family. As to quaternary structure, forms a complex with trm82.

It localises to the nucleus. It catalyses the reaction guanosine(46) in tRNA + S-adenosyl-L-methionine = N(7)-methylguanosine(46) in tRNA + S-adenosyl-L-homocysteine. It functions in the pathway tRNA modification; N(7)-methylguanine-tRNA biosynthesis. Catalyzes the formation of N(7)-methylguanine at position 46 (m7G46) in tRNA. The protein is tRNA (guanine-N(7)-)-methyltransferase (trm8) of Aspergillus fumigatus (strain ATCC MYA-4609 / CBS 101355 / FGSC A1100 / Af293) (Neosartorya fumigata).